A 253-amino-acid polypeptide reads, in one-letter code: 5-oxoprolinase subunit A (253 aa).

Belongs to the LamB/PxpA family. Forms a complex composed of PxpA, PxpB and PxpC.

It carries out the reaction 5-oxo-L-proline + ATP + 2 H2O = L-glutamate + ADP + phosphate + H(+). Functionally, catalyzes the cleavage of 5-oxoproline to form L-glutamate coupled to the hydrolysis of ATP to ADP and inorganic phosphate. This chain is 5-oxoprolinase subunit A, found in Syntrophobacter fumaroxidans (strain DSM 10017 / MPOB).